The chain runs to 160 residues: Sec-independent protein translocase protein TatB (160 aa).

The helical transmembrane segment at 1 to 21 (MIDLGVSKIALIGAVALIVIG) threads the bilayer. Disordered stretches follow at residues 70–100 (ARDVETSIQTSASDFEKSWSDATGSDASTAT) and 133–160 (RSGVRTKAQSGAARVARFRPQSGRSSSF). The span at 89–100 (SDATGSDASTAT) shows a compositional bias: polar residues.

Belongs to the TatB family. The Tat system comprises two distinct complexes: a TatABC complex, containing multiple copies of TatA, TatB and TatC subunits, and a separate TatA complex, containing only TatA subunits. Substrates initially bind to the TatABC complex, which probably triggers association of the separate TatA complex to form the active translocon.

The protein resides in the cell inner membrane. Functionally, part of the twin-arginine translocation (Tat) system that transports large folded proteins containing a characteristic twin-arginine motif in their signal peptide across membranes. Together with TatC, TatB is part of a receptor directly interacting with Tat signal peptides. TatB may form an oligomeric binding site that transiently accommodates folded Tat precursor proteins before their translocation. The chain is Sec-independent protein translocase protein TatB from Polaromonas sp. (strain JS666 / ATCC BAA-500).